Here is a 331-residue protein sequence, read N- to C-terminus: T-cell acute lymphocytic leukemia protein 1 (331 aa).

Residues 1 to 22 are compositionally biased toward basic and acidic residues; it reads MTERPPSEAARSDPQLEGRDAA. Disordered stretches follow at residues 1–27 and 40–86; these read MTER…ASMA and ETSR…EARH. Position 12 is a phosphoserine (Ser-12). The span at 56 to 70 shows a compositional bias: gly residues; the sequence is ARGGPGGGPAGGGGA. A compositionally biased stretch (basic and acidic residues) spans 72–86; it reads RDLKGRDAATAEARH. A phosphoserine mark is found at Ser-122 and Ser-172. Residues 187 to 239 enclose the bHLH domain; sequence VRRIFTNSRERWRQQNVNGAFAELRKLIPTHPPDKKLSKNEILRLAMKYINFL. The interval 249–331 is disordered; that stretch reads EGTQRAKTGK…LPAADGAGPR (83 aa). The segment covering 263-275 has biased composition (gly residues); sequence GAGGGGGGGGGGA.

Efficient DNA binding requires dimerization with another bHLH protein. Forms heterodimers with TCF3. Binds to the LIM domain containing protein LMO2 and to DRG1. Can assemble in a complex with LDB1 and LMO2. Component of a TAL-1 complex composed at least of CBFA2T3, LDB1, TAL1 and TCF3. Interacts with SBNO2; this interaction inhibits TAL1 occupancy of the DCSTAMP promoter, leading to the activation of the DCSTAMP promoter by the transcription factor MITF. Post-translationally, phosphorylated on serine residues. Phosphorylation of Ser-122 is strongly stimulated by hypoxia. Ubiquitinated; subsequent to hypoxia-dependent phosphorylation of Ser-122, ubiquitination targets the protein for rapid degradation via the ubiquitin system. This process may be characteristic for microvascular endothelial cells, since it could not be observed in large vessel endothelial cells. In terms of tissue distribution, leukemic stem cell.

Its subcellular location is the nucleus. Implicated in the genesis of hemopoietic malignancies. It may play an important role in hemopoietic differentiation. Serves as a positive regulator of erythroid differentiation. The sequence is that of T-cell acute lymphocytic leukemia protein 1 (TAL1) from Homo sapiens (Human).